Here is a 258-residue protein sequence, read N- to C-terminus: Tryptophan synthase alpha chain (258 aa).

Active-site proton acceptor residues include Glu52 and Asp63.

It belongs to the TrpA family. In terms of assembly, tetramer of two alpha and two beta chains.

The enzyme catalyses (1S,2R)-1-C-(indol-3-yl)glycerol 3-phosphate + L-serine = D-glyceraldehyde 3-phosphate + L-tryptophan + H2O. The protein operates within amino-acid biosynthesis; L-tryptophan biosynthesis; L-tryptophan from chorismate: step 5/5. Its function is as follows. The alpha subunit is responsible for the aldol cleavage of indoleglycerol phosphate to indole and glyceraldehyde 3-phosphate. The sequence is that of Tryptophan synthase alpha chain from Streptococcus pneumoniae (strain JJA).